Here is a 409-residue protein sequence, read N- to C-terminus: tRNA(Met) cytidine acetate ligase (409 aa).

Residues 7–20 (VVEY…HLHH), glycine 102, asparagine 169, and arginine 194 contribute to the ATP site.

Belongs to the TmcAL family.

It localises to the cytoplasm. It carries out the reaction cytidine(34) in elongator tRNA(Met) + acetate + ATP = N(4)-acetylcytidine(34) in elongator tRNA(Met) + AMP + diphosphate. In terms of biological role, catalyzes the formation of N(4)-acetylcytidine (ac(4)C) at the wobble position of elongator tRNA(Met), using acetate and ATP as substrates. First activates an acetate ion to form acetyladenylate (Ac-AMP) and then transfers the acetyl group to tRNA to form ac(4)C34. The protein is tRNA(Met) cytidine acetate ligase of Clostridium botulinum (strain Loch Maree / Type A3).